Reading from the N-terminus, the 376-residue chain is MNSRIPEDLIERAHRGKTTKEDALLLLEVPPFELFRFADELRDLAAGDTVTYVVNRNINFTSRCTGSCGFCAFRTDDGKVLSIEEIMEKVREAEKANATEVCIQGGLLPDVGLDFYQGIVEAIKAEFPEMHVHSFSPMEVYHASRISEIPVKESLRRLKRSGLDTMPGTAAEILSDRVRKIICPAKLNTAEWIEVVTQAHAAGIPTTATMMYGHVETPEERINHMLTIREIQKETGGITEFVPLPFMPYNNPVGEKMIKEGRYATPGLEDLKVYAVSRILFHGHVDNIQASWVKLGKKFAQFSLHCGVNDLGGTLMEESISRSAGACHGEMITVDELEWMIHGAGRIPKERTTLYREAHELASRNSRKIAGCGAFE.

Residues 50–275 form the Radical SAM core domain; the sequence is VTYVVNRNIN…PGLEDLKVYA (226 aa). [4Fe-4S] cluster contacts are provided by C64, C68, and C71.

This sequence belongs to the radical SAM superfamily. CofH family. Consists of two subunits, CofG and CofH. The cofactor is [4Fe-4S] cluster.

It carries out the reaction 5-amino-6-(D-ribitylamino)uracil + L-tyrosine + S-adenosyl-L-methionine = 5-amino-5-(4-hydroxybenzyl)-6-(D-ribitylimino)-5,6-dihydrouracil + 2-iminoacetate + 5'-deoxyadenosine + L-methionine + H(+). The protein operates within cofactor biosynthesis; coenzyme F0 biosynthesis. Catalyzes the radical-mediated synthesis of 5-amino-5-(4-hydroxybenzyl)-6-(D-ribitylimino)-5,6-dihydrouracil from 5-amino-6-(D-ribitylamino)uracil and L-tyrosine. This is 5-amino-6-(D-ribitylamino)uracil--L-tyrosine 4-hydroxyphenyl transferase 1 from Methanosarcina mazei (strain ATCC BAA-159 / DSM 3647 / Goe1 / Go1 / JCM 11833 / OCM 88) (Methanosarcina frisia).